The following is a 69-amino-acid chain: DNA gyrase inhibitor YacG (69 aa).

Residues C7, C10, C26, and C30 each coordinate Zn(2+).

Belongs to the DNA gyrase inhibitor YacG family. As to quaternary structure, interacts with GyrB. The cofactor is Zn(2+).

Inhibits all the catalytic activities of DNA gyrase by preventing its interaction with DNA. Acts by binding directly to the C-terminal domain of GyrB, which probably disrupts DNA binding by the gyrase. The sequence is that of DNA gyrase inhibitor YacG from Shewanella sp. (strain ANA-3).